The following is a 128-amino-acid chain: Glycine cleavage system H protein (128 aa).

The region spanning 24–106 (VFCVGITDHA…YDEGWLFRIR (83 aa)) is the Lipoyl-binding domain. The residue at position 65 (Lys65) is an N6-lipoyllysine.

The protein belongs to the GcvH family. The glycine cleavage system is composed of four proteins: P, T, L and H. It depends on (R)-lipoate as a cofactor.

Functionally, the glycine cleavage system catalyzes the degradation of glycine. The H protein shuttles the methylamine group of glycine from the P protein to the T protein. In Edwardsiella ictaluri (strain 93-146), this protein is Glycine cleavage system H protein.